A 159-amino-acid polypeptide reads, in one-letter code: Transcriptional repressor NrdR (159 aa).

The segment at 3–34 (CPFCRHDDTQVVDSRVSEDGAAIRRRRRCSAC) is a zinc-finger region. The ATP-cone domain occupies 49 to 139 (PAVVKKDGSR…VYRRFEDVSE (91 aa)).

It belongs to the NrdR family. Requires Zn(2+) as cofactor.

Negatively regulates transcription of bacterial ribonucleotide reductase nrd genes and operons by binding to NrdR-boxes. The polypeptide is Transcriptional repressor NrdR (Burkholderia cenocepacia (strain HI2424)).